The chain runs to 675 residues: Zinc finger CCCH domain-containing protein 65 (675 aa).

Positions 294–320 (TFSNEAKMDPGTSIKKRSAPSKDAKAR) are disordered. Residues 307–320 (IKKRSAPSKDAKAR) are compositionally biased toward basic residues. Residues 314 to 342 (SKDAKARKRAKARIKRAQERIALGVKKLK) are a coiled coil. 3 C3H1-type zinc fingers span residues 350-377 (PKPI…HDTI), 384-406 (PCCY…HDLS), and 409-432 (PCNN…HKGT). 2 disordered regions span residues 487–572 (LKPS…LPLG) and 586–612 (EQKT…SHIQ). Residues 490-504 (SSHSNQRNSSDASSS) show a composition bias toward low complexity. Polar residues predominate over residues 543 to 567 (KASSASKPNTDNSDSQTLKQSQQGS). Residues 586 to 595 (EQKTLNREPQ) show a composition bias toward basic and acidic residues. The span at 597–612 (PASSKNLKTTPSSHIQ) shows a compositional bias: polar residues.

In terms of biological role, possesses RNA-binding and ribonuclease activities in vitro. The sequence is that of Zinc finger CCCH domain-containing protein 65 (EMB1789) from Arabidopsis thaliana (Mouse-ear cress).